Here is a 382-residue protein sequence, read N- to C-terminus: uncharacterized protein (382 aa).

The helical transmembrane segment at 1–21 (MKIILVVFVLIFVGVIGFNMI) threads the bilayer.

This sequence belongs to the membrane fusion protein (MFP) (TC 8.A.1) family.

It localises to the membrane. This is an uncharacterized protein from Haemophilus influenzae (strain ATCC 51907 / DSM 11121 / KW20 / Rd).